A 391-amino-acid chain; its full sequence is MDGAARRGVLAALLACGLLLLGAAATPTPPPAGSSPQDTCTSCGFRRPEEPGKVDGDFLEAVKRHILSRLQMRDRPNITHAVPKAAMVTALRKLHAGKVREDGRVEIPSLDGQASAGPPAHDPVSEIISFAETDDLASSRVRLYFFISNEGNQNLFVVQASLWLYLKLLPYVLEKGSRRKVRVKVYFQDPDTSNKWNVVEKKVDLKRSGWHTFPMTEAIQALFERGERRLNLDVQCEGCEEYSVLPIYVDPGEESHRPFLVVQARLADNKHRIRKRGLECDGRTNLCCRQQFYIDFRLIGWNDWIIAPSGYYGNYCEGSCPAYLAGVPGSASSFHTAVVNQYRMRGLNPGTVNSCCIPTKLSTMSMLYFDDEYNIVKRDVPNMIVEECGCA.

The N-terminal stretch at 1 to 25 (MDGAARRGVLAALLACGLLLLGAAA) is a signal peptide. Residues 26–276 (TPTPPPAGSS…ADNKHRIRKR (251 aa)) constitute a propeptide that is removed on maturation. The interval 27 to 47 (PTPPPAGSSPQDTCTSCGFRR) is disordered. N77 carries an N-linked (GlcNAc...) asparagine glycan. 4 disulfides stabilise this stretch: C280-C288, C287-C356, C316-C388, and C320-C390.

It belongs to the TGF-beta family. Dimeric, linked by one or more disulfide bonds. Inhibin A is a dimer of alpha and beta-A. Inhibin B is a dimer of alpha and beta-B. Activin A is a homodimer of beta-A. Activin B is a homodimer of beta-B. Activin AB is a dimer of beta-A and beta-B.

It localises to the secreted. Its function is as follows. Inhibins and activins inhibit and activate, respectively, the secretion of follitropin by the pituitary gland. Inhibins/activins are involved in regulating a number of diverse functions such as hypothalamic and pituitary hormone secretion, gonadal hormone secretion, germ cell development and maturation, erythroid differentiation, insulin secretion, nerve cell survival, embryonic axial development or bone growth, depending on their subunit composition. Inhibins appear to oppose the functions of activins. This Gallus gallus (Chicken) protein is Inhibin beta B chain (INHBB).